Here is a 100-residue protein sequence, read N- to C-terminus: NADH-quinone oxidoreductase subunit K (100 aa).

The next 3 membrane-spanning stretches (helical) occupy residues 2 to 22, 29 to 49, and 60 to 80; these read IGLT…LVGI, IMLF…LAAI, and IIAF…LGLL.

It belongs to the complex I subunit 4L family. In terms of assembly, NDH-1 is composed of 14 different subunits. Subunits NuoA, H, J, K, L, M, N constitute the membrane sector of the complex.

Its subcellular location is the cell inner membrane. It carries out the reaction a quinone + NADH + 5 H(+)(in) = a quinol + NAD(+) + 4 H(+)(out). NDH-1 shuttles electrons from NADH, via FMN and iron-sulfur (Fe-S) centers, to quinones in the respiratory chain. The immediate electron acceptor for the enzyme in this species is believed to be ubiquinone. Couples the redox reaction to proton translocation (for every two electrons transferred, four hydrogen ions are translocated across the cytoplasmic membrane), and thus conserves the redox energy in a proton gradient. The protein is NADH-quinone oxidoreductase subunit K of Campylobacter concisus (strain 13826).